Reading from the N-terminus, the 297-residue chain is Cyclin-dependent kinase 1 (297 aa).

In terms of domain architecture, Protein kinase spans 4–287; it reads FEKIEKIGEG…AKDILEHPYF (284 aa). Residues 10–18 and Lys-33 each bind ATP; that span reads IGEGTYGVV. Position 14 is a phosphothreonine (Thr-14). Position 15 is a phosphotyrosine (Tyr-15). The active-site Proton acceptor is Asp-128. The residue at position 160 (Tyr-160) is a Phosphotyrosine. The residue at position 161 (Thr-161) is a Phosphothreonine; by CAK.

It belongs to the protein kinase superfamily. CMGC Ser/Thr protein kinase family. CDC2/CDKX subfamily. As to quaternary structure, forms a stable but non-covalent complex with a regulatory subunit and with a cyclin. Component of the Frs-CycA-Cdk1 complex composed of Cdk1, CycA and Z600.

Its subcellular location is the nucleus. It catalyses the reaction L-seryl-[protein] + ATP = O-phospho-L-seryl-[protein] + ADP + H(+). The catalysed reaction is L-threonyl-[protein] + ATP = O-phospho-L-threonyl-[protein] + ADP + H(+). It carries out the reaction [DNA-directed RNA polymerase] + ATP = phospho-[DNA-directed RNA polymerase] + ADP + H(+). With respect to regulation, phosphorylation at Thr-14 or Tyr-15 inactivates the enzyme, while phosphorylation at Thr-161 activates it. Its function is as follows. Plays a key role in the control of the eukaryotic cell cycle. Required for entry into S-phase and mitosis. In embryos, promotes the release of Rif1 from chromatin during mid-blastula transition. p34 is a component of the kinase complex that phosphorylates the repetitive C-terminus of RNA polymerase II. This Drosophila melanogaster (Fruit fly) protein is Cyclin-dependent kinase 1.